The sequence spans 842 residues: Translation initiation factor IF-2 (842 aa).

Disordered regions lie at residues 1-41 (MVAK…GFPD) and 112-219 (RPNR…QTYQ). Basic and acidic residues-rich tracts occupy residues 32–41 (PEDKKQGFPD) and 153–165 (RRGEGRPFARDFS). A tr-type G domain is found at 328-497 (ARPPVVTVMG…MLQAEVMELR (170 aa)). Residues 337 to 344 (GHVDHGKT) form a G1 region. A GTP-binding site is contributed by 337-344 (GHVDHGKT). Residues 362–366 (GITQH) are G2. A G3 region spans residues 383–386 (DTPG). GTP-binding positions include 383–387 (DTPGH) and 437–440 (NKID). The interval 437–440 (NKID) is G4. The tract at residues 473 to 475 (SAL) is G5.

It belongs to the TRAFAC class translation factor GTPase superfamily. Classic translation factor GTPase family. IF-2 subfamily.

The protein resides in the cytoplasm. In terms of biological role, one of the essential components for the initiation of protein synthesis. Protects formylmethionyl-tRNA from spontaneous hydrolysis and promotes its binding to the 30S ribosomal subunits. Also involved in the hydrolysis of GTP during the formation of the 70S ribosomal complex. The polypeptide is Translation initiation factor IF-2 (infB) (Treponema pallidum (strain Nichols)).